The primary structure comprises 786 residues: Ribosome biogenesis protein BOP1 homolog (786 aa).

Positions 1 to 11 (MTKKLTIKRKV) are enriched in basic residues. The segment at 1 to 161 (MTKKLTIKRK…DSDTSDEEDI (161 aa)) is disordered. 4 stretches are compositionally biased toward acidic residues: residues 28–37 (DNEEEEEEDL), 46–55 (EDSTDDEGID), 62–74 (SSEDLEFESDEEG), and 86–103 (SGDDDEESAEDEEEEDDA). A compositionally biased stretch (basic and acidic residues) spans 104–113 (DAKKSSKNND). The span at 151–160 (ADSDTSDEED) shows a compositional bias: acidic residues. WD repeat units follow at residues 447 to 488 (GHTD…RTIE), 490 to 528 (EDVVRCVAWCPNAKLSIIAVATGSRLLLVNPKVGDKLLV), 572 to 614 (THFK…SQIP), 617 to 655 (KSKGLIQCVLFHPVKPCFFVATQHNIRIYDLVKQELIKK), 658 to 697 (TNSKWISGMSIHPKGDNLLVSTYDKKMLWFDLDLSTKPYQ), 701 to 740 (LHRNAVRSVAFHLRYPLFASGSDDQAVIVSHGMVYNDLLQ), and 756 to 786 (REEFGVLDVNWHPVQPWVFSTGADCTIRLFT).

The protein belongs to the WD repeat BOP1/ERB1 family.

It localises to the nucleus. Its subcellular location is the nucleolus. It is found in the nucleoplasm. In terms of biological role, required for maturation of ribosomal RNAs and formation of the large ribosomal subunit. In Drosophila pseudoobscura pseudoobscura (Fruit fly), this protein is Ribosome biogenesis protein BOP1 homolog.